Here is an 81-residue protein sequence, read N- to C-terminus: Putative membrane protein insertion efficiency factor (81 aa).

This sequence belongs to the UPF0161 family.

The protein resides in the cell inner membrane. In terms of biological role, could be involved in insertion of integral membrane proteins into the membrane. The chain is Putative membrane protein insertion efficiency factor from Pseudomonas syringae pv. syringae (strain B728a).